Reading from the N-terminus, the 267-residue chain is Nanos homolog 1 (267 aa).

The segment at 40–56 (FSSWNDYLGLATLITRA) is essential for its translational repressor activity. Positions 57–94 (SDRGSPHEGPGPTAAGPTMGPPEDDEDDDGEEPEAGGR) are disordered. Residues 78–90 (PEDDEDDDGEEPE) are compositionally biased toward acidic residues. The segment at 188-242 (VCVFCRNNKEAVALYTTHILKGPDGRVLCPVLRRYTCPLCGASGDNAHTIKYCPL) adopts a Nanos-type zinc-finger fold. Zn(2+)-binding residues include cysteine 189, cysteine 192, histidine 205, cysteine 216, cysteine 224, cysteine 227, histidine 235, and cysteine 240. 2 short sequence motifs (C2HC) span residues 189–216 (CVFC…RVLC) and 224–240 (CPLC…IKYC). The disordered stretch occupies residues 243 to 267 (SKVPPPTVRPPPRSNRDSLPSKKLR). Pro residues predominate over residues 244–255 (KVPPPTVRPPPR). The span at 256–267 (SNRDSLPSKKLR) shows a compositional bias: basic and acidic residues.

This sequence belongs to the nanos family. In terms of assembly, interacts with PUM2, SNAPIN and CTNNB1. Interacts (via N-terminal region) with CTNND1. Interacts with DDX20 (via N-terminal region). In terms of tissue distribution, expressed in the oocyte. Transiently expressed in eight-cell embryos. At 12.5 dpc, it is re-expressed in the central nervous system and the expression continues in the adult brain, in which the hippocampal formation is the predominant region. Expressed in the seminiferous tubules of mature testis, but not in the primordial germ cells.

The protein localises to the cytoplasm. It localises to the perinuclear region. Functionally, may act as a translational repressor which regulates translation of specific mRNAs by forming a complex with PUM2 that associates with the 3'-UTR of mRNA targets. Capable of interfering with the proadhesive and anti-invasive functions of E-cadherin. Up-regulates the production of MMP14 to promote tumor cell invasion. Not essential for normal development. In Mus musculus (Mouse), this protein is Nanos homolog 1 (Nanos1).